A 179-amino-acid polypeptide reads, in one-letter code: Tegument protein UL55 homolog (179 aa).

Belongs to the alphaherpesvirinae HHV-1 UL55 family.

The protein resides in the virion tegument. It is found in the host nucleus matrix. The sequence is that of Tegument protein UL55 homolog from Homo sapiens (Human).